Reading from the N-terminus, the 345-residue chain is Anthranilate phosphoribosyltransferase (345 aa).

5-phospho-alpha-D-ribose 1-diphosphate contacts are provided by residues G80, 83–84 (GD), T88, 90–93 (NIST), 108–116 (KHGNRSVSS), and S120. G80 is an anthranilate binding site. S92 contacts Mg(2+). N111 contributes to the anthranilate binding site. R166 contacts anthranilate. Mg(2+) contacts are provided by D225 and E226.

Belongs to the anthranilate phosphoribosyltransferase family. Homodimer. It depends on Mg(2+) as a cofactor.

The catalysed reaction is N-(5-phospho-beta-D-ribosyl)anthranilate + diphosphate = 5-phospho-alpha-D-ribose 1-diphosphate + anthranilate. It participates in amino-acid biosynthesis; L-tryptophan biosynthesis; L-tryptophan from chorismate: step 2/5. Catalyzes the transfer of the phosphoribosyl group of 5-phosphorylribose-1-pyrophosphate (PRPP) to anthranilate to yield N-(5'-phosphoribosyl)-anthranilate (PRA). The sequence is that of Anthranilate phosphoribosyltransferase from Acetivibrio thermocellus (strain ATCC 27405 / DSM 1237 / JCM 9322 / NBRC 103400 / NCIMB 10682 / NRRL B-4536 / VPI 7372) (Clostridium thermocellum).